A 491-amino-acid polypeptide reads, in one-letter code: Hydroxymethylglutaryl-CoA synthase (491 aa).

Glu127 (proton donor/acceptor) is an active-site residue. The active-site Acyl-thioester intermediate is the Cys159. Residues Cys159, Thr201, and Ser250 each coordinate (3S)-3-hydroxy-3-methylglutaryl-CoA. Ser276 is modified (phosphoserine). The Proton donor/acceptor role is filled by His296. Residues His296, Lys305, Asn371, and Ser405 each contribute to the (3S)-3-hydroxy-3-methylglutaryl-CoA site.

This sequence belongs to the thiolase-like superfamily. HMG-CoA synthase family.

It carries out the reaction acetoacetyl-CoA + acetyl-CoA + H2O = (3S)-3-hydroxy-3-methylglutaryl-CoA + CoA + H(+). It participates in metabolic intermediate biosynthesis; (R)-mevalonate biosynthesis; (R)-mevalonate from acetyl-CoA: step 2/3. Hydroxymethylglutaryl-CoA synthase; part of the first module of ergosterol biosynthesis pathway that includes the early steps of the pathway, conserved across all eukaryotes, and which results in the formation of mevalonate from acetyl-coenzyme A (acetyl-CoA). ERG13 condenses acetyl-CoA with acetoacetyl-CoA to form hydroxymethylglutaryl-CoA (HMG-CoA). The first module starts with the action of the cytosolic acetyl-CoA acetyltransferase ERG10 that catalyzes the formation of acetoacetyl-CoA. The hydroxymethylglutaryl-CoA synthase ERG13 then condenses acetyl-CoA with acetoacetyl-CoA to form HMG-CoA. The rate-limiting step of the early module is the reduction to mevalonate by the 3-hydroxy-3-methylglutaryl-coenzyme A (HMG-CoA) reductases HMG1 and HMG2 which are derived from a single ancestral HMGR gene by gene duplication. The protein is Hydroxymethylglutaryl-CoA synthase of Saccharomyces cerevisiae (strain ATCC 204508 / S288c) (Baker's yeast).